We begin with the raw amino-acid sequence, 758 residues long: 5-methyltetrahydropteroyltriglutamate--homocysteine methyltransferase (758 aa).

5-methyltetrahydropteroyltri-L-glutamate is bound by residues 17 to 20 (RELK) and Lys117. Residues 434–436 (IGS) and Glu487 each bind L-homocysteine. L-methionine-binding positions include 434 to 436 (IGS) and Glu487. Residues 518–519 (RC) and Trp564 contribute to the 5-methyltetrahydropteroyltri-L-glutamate site. Asp602 contacts L-homocysteine. Asp602 contacts L-methionine. Glu608 contributes to the 5-methyltetrahydropteroyltri-L-glutamate binding site. 3 residues coordinate Zn(2+): His644, Cys646, and Glu668. His697 (proton donor) is an active-site residue. Cys729 contributes to the Zn(2+) binding site.

Belongs to the vitamin-B12 independent methionine synthase family. The cofactor is Zn(2+).

It carries out the reaction 5-methyltetrahydropteroyltri-L-glutamate + L-homocysteine = tetrahydropteroyltri-L-glutamate + L-methionine. It functions in the pathway amino-acid biosynthesis; L-methionine biosynthesis via de novo pathway; L-methionine from L-homocysteine (MetE route): step 1/1. Its function is as follows. Catalyzes the transfer of a methyl group from 5-methyltetrahydrofolate to homocysteine resulting in methionine formation. The polypeptide is 5-methyltetrahydropteroyltriglutamate--homocysteine methyltransferase (Yersinia enterocolitica serotype O:8 / biotype 1B (strain NCTC 13174 / 8081)).